Consider the following 247-residue polypeptide: 5'-nucleotidase SurE (247 aa).

A divalent metal cation contacts are provided by D8, D9, S39, and N91.

Belongs to the SurE nucleotidase family. Requires a divalent metal cation as cofactor.

The protein resides in the cytoplasm. The enzyme catalyses a ribonucleoside 5'-phosphate + H2O = a ribonucleoside + phosphate. In terms of biological role, nucleotidase that shows phosphatase activity on nucleoside 5'-monophosphates. This is 5'-nucleotidase SurE from Nitrosomonas europaea (strain ATCC 19718 / CIP 103999 / KCTC 2705 / NBRC 14298).